A 176-amino-acid polypeptide reads, in one-letter code: MSLWKDIKGTILPFWVTLRYLFRRPVTVCYPERKQTPAPRYRGRLVLTRDPDGEERCVACHLCSAACPVDCISMQAAEREDGRRYAAWFRINFSRCIFCGLCTEACPTLALQMTSEYELATRELLQVIYEKDELLIDGCGKNAEYNFYRRAGIGVVAPRGANPGESSPEDVKSNLP.

4Fe-4S ferredoxin-type domains lie at 47–77 (LTRD…MQAA) and 87–116 (AWFR…MTSE). [4Fe-4S] cluster is bound by residues Cys57, Cys60, Cys63, Cys67, Cys96, Cys99, Cys102, and Cys106.

Belongs to the complex I 23 kDa subunit family. In terms of assembly, NDH-1 is composed of 14 different subunits. Subunits NuoA, H, J, K, L, M, N constitute the membrane sector of the complex. The cofactor is [4Fe-4S] cluster.

The protein localises to the cell inner membrane. It catalyses the reaction a quinone + NADH + 5 H(+)(in) = a quinol + NAD(+) + 4 H(+)(out). In terms of biological role, NDH-1 shuttles electrons from NADH, via FMN and iron-sulfur (Fe-S) centers, to quinones in the respiratory chain. The immediate electron acceptor for the enzyme in this species is believed to be ubiquinone. Couples the redox reaction to proton translocation (for every two electrons transferred, four hydrogen ions are translocated across the cytoplasmic membrane), and thus conserves the redox energy in a proton gradient. This Syntrophotalea carbinolica (strain DSM 2380 / NBRC 103641 / GraBd1) (Pelobacter carbinolicus) protein is NADH-quinone oxidoreductase subunit I.